The chain runs to 92 residues: MALLDYFLRKKEKQVTTASKAKERLQIIVAHERNSRNKQPDYLPQLTEDILKVLRKYIKVSDESFSINLDKKDGDLNVLELNIELHDEQTAD.

Belongs to the MinE family.

Functionally, prevents the cell division inhibition by proteins MinC and MinD at internal division sites while permitting inhibition at polar sites. This ensures cell division at the proper site by restricting the formation of a division septum at the midpoint of the long axis of the cell. The sequence is that of Cell division topological specificity factor from Colwellia psychrerythraea (strain 34H / ATCC BAA-681) (Vibrio psychroerythus).